The following is a 270-amino-acid chain: MTAKVRIAVVGASGRMGRTLIESAKQQQVIILGAAIERTGSSLIGIDAGVLAGVGAMNVAITDSLDKVVNDFDVLIDFTSPESSIIHLDWCAKNHKAIVIGTTGFNHAQKEQINAYSEQVPVVLAPNMSVGVNVMWKLLALATEVMGDYTDIEIIEAHHRHKKDAPSGTALKMGEIIAQTLGRDLEQCAVFGREGITGERDPNTIGFATVRAGDIVGEHTAMFADIGERLEITHKASSRMTFANGAMRAAFWLSDQNAGLYDMQQVLGLN.

Residues 11–16 and Glu37 contribute to the NAD(+) site; that span reads GASGRM. Arg38 lines the NADP(+) pocket. NAD(+) is bound by residues 101–103 and 125–128; these read GTT and APNM. The active-site Proton donor/acceptor is the His158. His159 contributes to the (S)-2,3,4,5-tetrahydrodipicolinate binding site. The active-site Proton donor is Lys162. Residue 168–169 coordinates (S)-2,3,4,5-tetrahydrodipicolinate; the sequence is GT.

It belongs to the DapB family.

It localises to the cytoplasm. It carries out the reaction (S)-2,3,4,5-tetrahydrodipicolinate + NAD(+) + H2O = (2S,4S)-4-hydroxy-2,3,4,5-tetrahydrodipicolinate + NADH + H(+). It catalyses the reaction (S)-2,3,4,5-tetrahydrodipicolinate + NADP(+) + H2O = (2S,4S)-4-hydroxy-2,3,4,5-tetrahydrodipicolinate + NADPH + H(+). Its pathway is amino-acid biosynthesis; L-lysine biosynthesis via DAP pathway; (S)-tetrahydrodipicolinate from L-aspartate: step 4/4. In terms of biological role, catalyzes the conversion of 4-hydroxy-tetrahydrodipicolinate (HTPA) to tetrahydrodipicolinate. The chain is 4-hydroxy-tetrahydrodipicolinate reductase from Shewanella frigidimarina (strain NCIMB 400).